A 694-amino-acid polypeptide reads, in one-letter code: Voltage-gated chloride channel TMC4 (694 aa).

Residues 1–21 (MEAWGQSPACSSSRKARTGPS) are disordered. Over 1 to 150 (MEAWGQSPAC…GTESYFSLLR (150 aa)) the chain is Extracellular. Residues 151–171 (FLLFLNLVASVIEICMKLIPT) traverse the membrane as a helical segment. Residues 172–231 (WLEGAPPGPPGPNISSPCGSYIPHTHGLVAFPTQLFNLLSGEGYLEWSPLFYGFYPPRSN) lie on the Cytoplasmic side of the membrane. The chain crosses the membrane as a helical span at residues 232–252 (LAITYLCSVFAISVIYLLCIL). Residues 253 to 330 (RRSVSGLKET…SQRAKVWSMR (78 aa)) are Extracellular-facing. Residues 331–351 (ALLNVLVLALLGAAFYGIYWA) form a helical membrane-spanning segment. Over 352–376 (TEYTLTLQETPLVRQTPLFKLLVDY) the chain is Cytoplasmic. Residues 377-397 (LPSIFISLFNFVLPPVFKFIA) form a helical membrane-spanning segment. Over 398 to 407 (SLEGYTQSRQ) the chain is Extracellular. Residues 408 to 428 (IVLILLRTVFLRLASLVFLLV) traverse the membrane as a helical segment. Residues 429–465 (SLWSQITCGGNMEAEGCKACGYNYKEIPCWETRLGQE) lie on the Cytoplasmic side of the membrane. Residues 466-486 (MYKLVLFDLLMGLLVTLLVQF) form a helical membrane-spanning segment. Topologically, residues 487-513 (PRKILCGLCPGALGRLSGTLEFQVPDE) are extracellular. Residues 514–534 (VLGLIYAQTVVWVGSFFCPLL) traverse the membrane as a helical segment. Residue proline 535 is a topological domain, cytoplasmic. A helical transmembrane segment spans residues 536–556 (LINTAKFLILFCLKKITLFSI). The Extracellular portion of the chain corresponds to 557–574 (YSPASRTFRASTANFFFP). The chain crosses the membrane as a helical span at residues 575-595 (LVLLVGLAISAVPVLYSIFLI). At 596–635 (PPSKLCGPFRGKLSIWAQIPEAIESLPQTAQNFLYFLGTQ) the chain is on the cytoplasmic side. The chain crosses the membrane as a helical span at residues 636–656 (AFTVPLLILSSILMMYTVALA). Residues 657-694 (NCYGRLISELKRQIETEVQNKVFLAQRAVALSSRNGTS) are Extracellular-facing. N-linked (GlcNAc...) asparagine glycosylation occurs at asparagine 691.

Belongs to the TMC family. Expressed in taste bud cells of the posterior tongue. Ubiquitously expressed.

Its subcellular location is the membrane. It catalyses the reaction chloride(in) = chloride(out). Functionally, voltage-gated chloride channel involved in high-concentration salt taste sensation. Depolarization induced by high NaCl concentration may trigger the activation of TMC4-mediated chloride influx into taste bud cells, helping the return to resting potential. Also allows permeation of organic anions including gluconate, but their current amplitudes at positive potentials are less than that of chloride. Involved in pH and temperature-dependent modulation of salty taste. The protein is Voltage-gated chloride channel TMC4 of Mus musculus (Mouse).